The sequence spans 672 residues: Amidase chyE (672 aa).

The Nucleophile role is filled by Cys-2. The 218-residue stretch at 2 to 219 folds into the Glutamine amidotransferase type-2 domain; the sequence is CGISAFLCHP…PGHYLISRPN (218 aa). The region spanning 250 to 639 is the Asparagine synthetase domain; that stretch reads VRKRLLEAVK…TQEAVEKAFT (390 aa).

Belongs to the asparagine synthetase family.

It functions in the pathway pigment biosynthesis. Amidase; part of the gene cluster that mediates the biosynthesis of the yellow pigment chrysogine. the NRPS chyA mediates the condensation of anthranilic acid and alanine into the intermediate 2-(2-aminopropanamido)benzoic acid. The remainder of the pathway is highly branched yielding at least 13 chrysogine-related compounds. The malonyl transferase chyE converts 2-(2-aminopropanamido)benzoic acid and 2-(2-aminopropanamido)benzamidine into 2-(2-(2-carboxyacetamido)propanamido)benzoic acid and 3-((1-((2-carbamoylphenyl)amino)-1-oxopropan-2-yl)amino)-3-oxopropanoic acid, respectively. ChyD is an amidase, being responsible for the amidation of the carboxylic acid moiety of 2-(2-aminopropanamido)benzoic acid, 2-(2-(2-carboxyacetamido)propanamido)benzoic acid and 2-(2-((4-amino-1-carboxy-4-oxobutyl)amino)propanamido)benzoic acid. ChyC is involved in the same reactions as ChyD, but plays a more minor role in the amidation reactions compared to chyD. The oxidoreductases chyH and chyM are involved in oxidation reactions that form N-pyruvoylanthranilamide from 2-(2-aminopropanamido)benzamidine and (1-((2-carbamoylphenyl)amino)-1-oxopropan-2-yl)glutamine, respectively. N-pyruvoylanthranilamide is further converted via two further branches in the pathway, yielding chrysogine and additional chrysogine-related coumpounds. Chrysogine is likely formed by a spontaneous ring closure from N-pyruvoylanthranilamide. This is Amidase chyE from Penicillium rubens (strain ATCC 28089 / DSM 1075 / NRRL 1951 / Wisconsin 54-1255) (Penicillium chrysogenum).